Here is a 382-residue protein sequence, read N- to C-terminus: Lipid-A-disaccharide synthase (382 aa).

This sequence belongs to the LpxB family.

The enzyme catalyses 2-N,3-O-bis[(3R)-3-hydroxytetradecanoyl]-alpha-D-glucosaminyl 1-phosphate + UDP-2-N,3-O-bis[(3R)-3-hydroxytetradecanoyl]-alpha-D-glucosamine = lipid A disaccharide (E. coli) + UDP + H(+). It carries out the reaction a lipid X + a UDP-2-N,3-O-bis[(3R)-3-hydroxyacyl]-alpha-D-glucosamine = a lipid A disaccharide + UDP + H(+). Its pathway is glycolipid biosynthesis; lipid IV(A) biosynthesis; lipid IV(A) from (3R)-3-hydroxytetradecanoyl-[acyl-carrier-protein] and UDP-N-acetyl-alpha-D-glucosamine: step 5/6. Its function is as follows. Condensation of UDP-2,3-diacylglucosamine and 2,3-diacylglucosamine-1-phosphate to form lipid A disaccharide, a precursor of lipid A, a phosphorylated glycolipid that anchors the lipopolysaccharide to the outer membrane of the cell. The sequence is that of Lipid-A-disaccharide synthase from Salmonella typhimurium (strain LT2 / SGSC1412 / ATCC 700720).